We begin with the raw amino-acid sequence, 462 residues long: MTVEGGVQYSRIAEIKGPLVIVDGVENAAFDELVEIETNEGGRRLGKVLEIGNGKAIVQVFEGTTGLSVAGTNARFVGKVMEMPVSREVLGRIFDGLGRPKDKLPDPIADKFIDINGEAMNPEQREYPKDFIQTGVSAIDGIMTLVRGQKLPIFSGSGMSHNILAAQIARQASVVGTGDDFAVVFAAIGVQYSEAEYFRRSLEESGALKRSVLFLNLANDPAIERIITPRVALTVAEYLAFDLGMHVLVILTDMTNYAEALREISAAREEVPGRKGYPGYLYTDLSTIYERAGRLVGRKGSVTQVPILTMPSDDITHPIPDLTGYITEGQVVLGRDLFRQGVYPPVNILMSLSRLMKDGIGEGRTREDHQEISNQNYDAYSRAQEVRALAGIVGKAGLTDIDLRYMGVGDSLEQRLLTQATDENRTIEETLGIMWDTVSGLPKNELTKVKDKYVEKFYKGSA.

The protein belongs to the ATPase alpha/beta chains family. In terms of assembly, has multiple subunits with at least A(3), B(3), C, D, E, F, H, I and proteolipid K(x).

The protein resides in the cell membrane. In terms of biological role, component of the A-type ATP synthase that produces ATP from ADP in the presence of a proton gradient across the membrane. The B chain is a regulatory subunit. The chain is A-type ATP synthase subunit B from Cenarchaeum symbiosum (strain A).